Consider the following 499-residue polypeptide: Catalase (499 aa).

Residues 1–25 (MTDRPIMTTSAGAPIPDNQNSLTAG) are disordered. Positions 7–23 (MTTSAGAPIPDNQNSLT) are enriched in polar residues. Catalysis depends on residues histidine 55 and asparagine 127. Tyrosine 337 contributes to the heme binding site.

It belongs to the catalase family. Homotetramer. Heme is required as a cofactor.

It localises to the periplasm. It catalyses the reaction 2 H2O2 = O2 + 2 H2O. Decomposes hydrogen peroxide into water and oxygen; serves to protect cells from the toxic effects of hydrogen peroxide. In Brucella abortus biovar 1 (strain 9-941), this protein is Catalase (katA).